The primary structure comprises 341 residues: 2-acylglycerol O-acyltransferase 3 (341 aa).

2 helical membrane passes run 29–49 (YVLT…VLLF) and 50–70 (TSLW…WDTP). Asn-126 carries an N-linked (GlcNAc...) asparagine glycan. Residues 137-157 (LFPGLRPWLAVLAGLFYLPVY) traverse the membrane as a helical segment.

Belongs to the diacylglycerol acyltransferase family. Ubiquitinated. Ubiquitination leads to proteasomal degradation. Selectively expressed in the digestive system. Highly expressed in the ileum, and at lower level in jejunum, duodenum, colon, cecum and the rectum. Not expressed in the stomach and the esophagus and trachea. Expressed at very low level in liver.

The protein localises to the endoplasmic reticulum membrane. Its subcellular location is the cytoplasm. It localises to the perinuclear region. The catalysed reaction is a 2-acylglycerol + an acyl-CoA = a 1,2-diacylglycerol + CoA. The enzyme catalyses an acyl-CoA + a 1,2-diacyl-sn-glycerol = a triacyl-sn-glycerol + CoA. It catalyses the reaction 2-(9Z-octadecenoyl)-glycerol + (9Z)-octadecenoyl-CoA = 1,2-di-(9Z-octadecenoyl)-sn-glycerol + CoA. It carries out the reaction 2-(9Z-octadecenoyl)-glycerol + hexadecanoyl-CoA = 1-hexadecanoyl-2-(9Z-octadecenoyl)-sn-glycerol + CoA. The catalysed reaction is 1,2-di-(9Z-octadecenoyl)-sn-glycerol + (9Z)-octadecenoyl-CoA = 1,2,3-tri-(9Z-octadecenoyl)-glycerol + CoA. The enzyme catalyses 1-hexadecanoyl-2-(9Z-octadecenoyl)-sn-glycerol + hexadecanoyl-CoA = 1,3-dihexadecanoyl-2-(9Z-octadecenoyl)glycerol + CoA. It catalyses the reaction all-trans-retinol + hexadecanoyl-CoA = all-trans-retinyl hexadecanoate + CoA. It carries out the reaction 1-O-(9Z-octadecenyl)-glycerol + (9Z)-octadecenoyl-CoA = 1-O-(9Z-octadecyl)-3-(9Z-octadecenoyl)-glycerol + CoA. The catalysed reaction is 1-O-(9Z-octadecyl)-3-(9Z-octadecenoyl)-glycerol + (9Z)-octadecenoyl-CoA = 1-O-(9Z-octadecenyl)-2,3-di-(9Z-octadecenoyl)glycerol + CoA. Its pathway is glycerolipid metabolism; triacylglycerol biosynthesis. Catalyzes the formation of diacylglycerol from 2-monoacylglycerol and fatty acyl-CoA. Also able to catalyze the terminal step in triacylglycerol synthesis by using diacylglycerol and fatty acyl-CoA as substrates. Has a preference toward palmitoyl-CoA and oleoyl-CoA. May be involved in absorption of dietary fat in the small intestine by catalyzing the resynthesis of triacylglycerol in enterocytes. Also able to use 1-monoalkylglycerol (1-MAkG) as an acyl acceptor for the synthesis of monoalkyl-monoacylglycerol (MAMAG). The protein is 2-acylglycerol O-acyltransferase 3 of Homo sapiens (Human).